Here is an 862-residue protein sequence, read N- to C-terminus: Leucine--tRNA ligase (862 aa).

The short motif at 51–61 (PYPSGSLHMGH) is the 'HIGH' region element. The short motif at 624-628 (KMSKS) is the 'KMSKS' region element. Lys627 lines the ATP pocket.

Belongs to the class-I aminoacyl-tRNA synthetase family.

Its subcellular location is the cytoplasm. It carries out the reaction tRNA(Leu) + L-leucine + ATP = L-leucyl-tRNA(Leu) + AMP + diphosphate. The sequence is that of Leucine--tRNA ligase from Prochlorococcus marinus (strain NATL2A).